Reading from the N-terminus, the 82-residue chain is Small ribosomal subunit protein bS16 (82 aa).

This sequence belongs to the bacterial ribosomal protein bS16 family.

The protein is Small ribosomal subunit protein bS16 of Aeromonas salmonicida (strain A449).